Reading from the N-terminus, the 302-residue chain is HTH-type transcriptional regulator AlsR (302 aa).

The HTH lysR-type domain occupies methionine 1–threonine 58. A DNA-binding region (H-T-H motif) is located at residues phenylalanine 18–lysine 37.

The protein belongs to the LysR transcriptional regulatory family.

Regulates the expression of the alsSD operon for acetoin biosynthesis. The sequence is that of HTH-type transcriptional regulator AlsR (alsR) from Bacillus subtilis (strain 168).